The chain runs to 381 residues: Arf-GAP with dual PH domain-containing protein 2 (381 aa).

The region spanning 9-131 (KRLLELLRAP…FMADGETISL (123 aa)) is the Arf-GAP domain. The C4-type zinc-finger motif lies at 25–48 (CADCGAADPDWASYKLGIFICLNC). PH domains follow at residues 132 to 233 (PGNR…AARL) and 255 to 361 (NYLK…GVLS).

Highly expressed in placenta, spleen, kidney, skeletal muscle and adrenal gland. Weakly expressed in thyroid, liver, heart, lung, small intestine, peripheral blood leukocytes. Not detected in spinal cord, brain, stomach, trachea, colon, lymph node and bone marrow.

It is found in the cytoplasm. The protein localises to the cell membrane. GTPase-activating protein for the ADP ribosylation factor family (Potential). Binds phosphatidylinositol 3,4,5-trisphosphate (PtdInsP3) and inositol 1,3,4,5-tetrakisphosphate (InsP4). Possesses a stoichiometry of two binding sites for InsP4 with identical affinity. The protein is Arf-GAP with dual PH domain-containing protein 2 (ADAP2) of Homo sapiens (Human).